The following is a 472-amino-acid chain: 3-isopropylmalate dehydratase large subunit (472 aa).

3 residues coordinate [4Fe-4S] cluster: cysteine 353, cysteine 414, and cysteine 417.

Belongs to the aconitase/IPM isomerase family. LeuC type 1 subfamily. As to quaternary structure, heterodimer of LeuC and LeuD. [4Fe-4S] cluster is required as a cofactor.

It carries out the reaction (2R,3S)-3-isopropylmalate = (2S)-2-isopropylmalate. The protein operates within amino-acid biosynthesis; L-leucine biosynthesis; L-leucine from 3-methyl-2-oxobutanoate: step 2/4. Catalyzes the isomerization between 2-isopropylmalate and 3-isopropylmalate, via the formation of 2-isopropylmaleate. This Acinetobacter baumannii (strain AB0057) protein is 3-isopropylmalate dehydratase large subunit.